The sequence spans 222 residues: Probable nicotinate-nucleotide adenylyltransferase (222 aa).

The protein belongs to the NadD family.

It carries out the reaction nicotinate beta-D-ribonucleotide + ATP + H(+) = deamido-NAD(+) + diphosphate. It functions in the pathway cofactor biosynthesis; NAD(+) biosynthesis; deamido-NAD(+) from nicotinate D-ribonucleotide: step 1/1. Its function is as follows. Catalyzes the reversible adenylation of nicotinate mononucleotide (NaMN) to nicotinic acid adenine dinucleotide (NaAD). The polypeptide is Probable nicotinate-nucleotide adenylyltransferase (Xylella fastidiosa (strain M23)).